We begin with the raw amino-acid sequence, 336 residues long: Calcium uniporter protein 3, mitochondrial (336 aa).

A mitochondrion-targeting transit peptide spans 1 to 69; it reads MAMRKLLSKK…RFMHNSAMIR (69 aa). Helical transmembrane passes span 231–251 and 257–277; these read LWAG…LTFW and VMEP…YAFF. Positions 255 to 263 match the Selectivity filter motif; sequence WDVMEPICF. Glu259 is a Ca(2+) binding site.

It belongs to the MCU (TC 1.A.77) family.

Its subcellular location is the mitochondrion inner membrane. The enzyme catalyses Ca(2+)(in) = Ca(2+)(out). Its function is as follows. Mitochondrial inner membrane calcium uniporter that mediates calcium uptake into mitochondria. Constitutes a pore-forming and calcium-conducting subunit. Mitochondrial calcium homeostasis plays key roles in cellular physiology and regulates cell bioenergetics, cytoplasmic calcium signals and activation of cell death pathways. The polypeptide is Calcium uniporter protein 3, mitochondrial (Arabidopsis thaliana (Mouse-ear cress)).